Consider the following 122-residue polypeptide: UPF0145 protein BamMC406_5002 (122 aa).

Belongs to the UPF0145 family.

The polypeptide is UPF0145 protein BamMC406_5002 (Burkholderia ambifaria (strain MC40-6)).